The sequence spans 158 residues: 6,7-dimethyl-8-ribityllumazine synthase 2 (158 aa).

5-amino-6-(D-ribitylamino)uracil is bound by residues tryptophan 20, 54-56 (AYE), and 78-80 (FVI). The Proton donor role is filled by arginine 86. Serine 111 is a 5-amino-6-(D-ribitylamino)uracil binding site. Residue histidine 125 coordinates (2S)-2-hydroxy-3-oxobutyl phosphate.

It belongs to the DMRL synthase family. Homodecamer, arranged as a dimer of pentamers.

It localises to the cytoplasm. The catalysed reaction is (2S)-2-hydroxy-3-oxobutyl phosphate + 5-amino-6-(D-ribitylamino)uracil = 6,7-dimethyl-8-(1-D-ribityl)lumazine + phosphate + 2 H2O + H(+). The protein operates within cofactor biosynthesis; riboflavin biosynthesis; riboflavin from 2-hydroxy-3-oxobutyl phosphate and 5-amino-6-(D-ribitylamino)uracil: step 1/2. Catalyzes the formation of 6,7-dimethyl-8-ribityllumazine by condensation of 5-amino-6-(D-ribitylamino)uracil with 3,4-dihydroxy-2-butanone 4-phosphate. This is the penultimate step in the biosynthesis of riboflavin. The isozyme RibH2 but not RibH1 is essential for Brucella intracellular survival and replication inside macrophages or in mice. Displays low catalytic activity in comparison with the isozyme RibH1. Is a highly immunogenic protein. Activates dendritic cells (DCs) in vitro, increasing the levels of costimulatory molecules and the secretion of pro-inflammatory cytokines, and recruits DCs, B cells and CD8+ T cells in vivo, both effects in a TLR4-dependent manner. Induces the cross presentation of covalently attached peptides and generates a strong and long-lasting humoral immune response without adjuvants; TLR4 signaling is necessary for the induction of the cytotoxic response but not for antigen cross presentation. Elicits a TLR4-mediated protective response against B16 melanoma in mice, slowing tumor growth and prolonging mice survival. This chain is 6,7-dimethyl-8-ribityllumazine synthase 2, found in Brucella abortus (strain 2308).